A 417-amino-acid chain; its full sequence is Serine hydroxymethyltransferase (417 aa).

Residues L121 and 125–127 (GHL) contribute to the (6S)-5,6,7,8-tetrahydrofolate site. K229 is subject to N6-(pyridoxal phosphate)lysine. 354–356 (SPF) lines the (6S)-5,6,7,8-tetrahydrofolate pocket.

It belongs to the SHMT family. Homodimer. It depends on pyridoxal 5'-phosphate as a cofactor.

It is found in the cytoplasm. The catalysed reaction is (6R)-5,10-methylene-5,6,7,8-tetrahydrofolate + glycine + H2O = (6S)-5,6,7,8-tetrahydrofolate + L-serine. Its pathway is one-carbon metabolism; tetrahydrofolate interconversion. The protein operates within amino-acid biosynthesis; glycine biosynthesis; glycine from L-serine: step 1/1. Catalyzes the reversible interconversion of serine and glycine with tetrahydrofolate (THF) serving as the one-carbon carrier. This reaction serves as the major source of one-carbon groups required for the biosynthesis of purines, thymidylate, methionine, and other important biomolecules. Also exhibits THF-independent aldolase activity toward beta-hydroxyamino acids, producing glycine and aldehydes, via a retro-aldol mechanism. In Dichelobacter nodosus (strain VCS1703A), this protein is Serine hydroxymethyltransferase.